The primary structure comprises 372 residues: MKNNYTSLKSPLDEEDELKTDHEIDLEKGLLPEYNSEEEGTLPLYSDISKLANPVPEDSSTGPTEIANPNVERRQEFKDSHPNIYFLLRLLISVLAVSVVFFTAWVCVNPLEKSIFGKVAFSVTIGITCPILFIATFCFFETWTQAVAQCIKVTVIFLAQCVKVTVIFLAQCVKVTAVFLAKCVKVIAVGLYNSKKDLVVTIWLAWVVICFILFGCVKDGRLNLNKALICSTCSISAALFFILLLVCIPIWTLKHMLFGLFQVLGVQSCVVIVTKGLMYLFDKHIDATGYEIEASSLFVIGNFLFFYEMECPGALKRMPKFIRNGIASFLEGIGNAFGGIGNAIGRIGNAFRGANDNNNNIPLEETEAESEV.

6 helical membrane-spanning segments follow: residues 86-106, 120-140, 153-173, 197-217, 233-253, and 257-277; these read FLLRLLISVLAVSVVFFTAWV, AFSVTIGITCPILFIATFCFF, VTVIFLAQCVKVTVIFLAQCV, DLVVTIWLAWVVICFILFGCV, CSISAALFFILLLVCIPIWTL, and LFGLFQVLGVQSCVVIVTKGL.

The protein belongs to the WTF family. In terms of assembly, homomer. Interacts with other proteins that exhibit high sequence similarity.

The protein localises to the spore membrane. It localises to the vacuole membrane. In terms of biological role, acts as a suppressor component of the dual wtf meiotic drive system, and can suppress but not confer meiotic drive by compatible poisons. Wtf meiotic drive systems promote unequal transmission of alleles from the parental zygote to progeny spores by encoding a poison and an antidote from the same locus; the poison is trans-acting and forms toxic aggregates in all spores within an ascus, wherease the antidote is spore-specific and targets aggregates for degradation by the vacuole. Meiotic drive by wtf systems therefore lead to poisoning of all progeny that do not inherit the dual poison/antidote allele, or express a compatible antidote. In Schizosaccharomyces pombe (strain 972 / ATCC 24843) (Fission yeast), this protein is Meiotic drive suppressor wtf18.